Here is a 192-residue protein sequence, read N- to C-terminus: Imidazoleglycerol-phosphate dehydratase (192 aa).

The protein belongs to the imidazoleglycerol-phosphate dehydratase family.

It is found in the cytoplasm. The catalysed reaction is D-erythro-1-(imidazol-4-yl)glycerol 3-phosphate = 3-(imidazol-4-yl)-2-oxopropyl phosphate + H2O. It participates in amino-acid biosynthesis; L-histidine biosynthesis; L-histidine from 5-phospho-alpha-D-ribose 1-diphosphate: step 6/9. The chain is Imidazoleglycerol-phosphate dehydratase from Clostridioides difficile (strain 630) (Peptoclostridium difficile).